Here is a 301-residue protein sequence, read N- to C-terminus: Ankyrin repeat domain-containing protein 29 (301 aa).

8 ANK repeats span residues 11–41 (PLAN…DVDC), 45–74 (HGTT…DINL), 78–107 (SGTT…STEF), 111–140 (DGGT…NIHD), 144–173 (DGAT…KVNQ), 177–206 (DGTA…DRDA), 210–239 (DGTT…TLGI), and 242–271 (NGTS…DPSL).

This is Ankyrin repeat domain-containing protein 29 (ANKRD29) from Homo sapiens (Human).